The primary structure comprises 94 residues: Co-chaperonin GroES (94 aa).

The protein belongs to the GroES chaperonin family. In terms of assembly, heptamer of 7 subunits arranged in a ring. Interacts with the chaperonin GroEL.

The protein resides in the cytoplasm. Functionally, together with the chaperonin GroEL, plays an essential role in assisting protein folding. The GroEL-GroES system forms a nano-cage that allows encapsulation of the non-native substrate proteins and provides a physical environment optimized to promote and accelerate protein folding. GroES binds to the apical surface of the GroEL ring, thereby capping the opening of the GroEL channel. This Pediococcus pentosaceus (strain ATCC 25745 / CCUG 21536 / LMG 10740 / 183-1w) protein is Co-chaperonin GroES.